A 38-amino-acid chain; its full sequence is L-amino-acid oxidase (38 aa).

This sequence belongs to the flavin monoamine oxidase family. FIG1 subfamily. As to quaternary structure, homodimer; non-covalently linked. The cofactor is FAD. In terms of processing, N-glycosylated. Expressed by the venom gland.

Its subcellular location is the secreted. It carries out the reaction an L-alpha-amino acid + O2 + H2O = a 2-oxocarboxylate + H2O2 + NH4(+). It catalyses the reaction L-leucine + O2 + H2O = 4-methyl-2-oxopentanoate + H2O2 + NH4(+). The catalysed reaction is L-phenylalanine + O2 + H2O = 3-phenylpyruvate + H2O2 + NH4(+). The enzyme catalyses L-tryptophan + O2 + H2O = indole-3-pyruvate + H2O2 + NH4(+). It carries out the reaction L-methionine + O2 + H2O = 4-methylsulfanyl-2-oxobutanoate + H2O2 + NH4(+). It catalyses the reaction L-arginine + O2 + H2O = 5-guanidino-2-oxopentanoate + H2O2 + NH4(+). The catalysed reaction is L-2-aminohexanoate + O2 + H2O = 2-oxohexanoate + H2O2 + NH4(+). The enzyme catalyses L-2-aminopentanoate + O2 + H2O = 2-oxopentanoate + H2O2 + NH4(+). It carries out the reaction L-tyrosine + O2 + H2O = 3-(4-hydroxyphenyl)pyruvate + H2O2 + NH4(+). Its function is as follows. Catalyzes an oxidative deamination of predominantly hydrophobic and aromatic L-amino acids, thus producing hydrogen peroxide that may contribute to the diverse toxic effects of this enzyme. Is very active against L-Phe and L-Tyr, moderately active against L-Trp, L-Met, L-Leu, L-norleucine (L-2-aminohexanoate), L-Arg and L-norvaline (L-2-aminopentanoate), and slightly active against L-His, L-cystine, and L-Ile. L-Gln, L-Lys, L-Asn, L-ornithine, L-Ala and L-Val are oxidized very slowly. Exhibits diverse biological activities, such as hemorrhage, hemolysis, edema, apoptosis of vascular endothelial cells or tumor cell lines, antibacterial and antiparasitic activities. This protein inhibits both agonist- and shear stress-induced platelet aggregation (SIPA). Effects of snake L-amino oxidases on platelets are controversial, since they either induce aggregation or inhibit agonist-induced aggregation. These different effects are probably due to different experimental conditions. This Naja kaouthia (Monocled cobra) protein is L-amino-acid oxidase.